The chain runs to 543 residues: Sodium/glucose cotransporter (543 aa).

14 helical membrane passes run 10–30 (FIDIMVFAIYVAIIIGVGLWV), 45–65 (FLAGKSLPWWAVGASLIAANI), 79–99 (SIGLAIASYEWMSAITLIIVG), 129–149 (ILAVFWISLYIFVNLTSVLYL), 156–176 (TILGIPLMYSILGLALFALVY), 193–213 (VFFLVLGGFMTTYMAVSFIGG), 246–266 (LPGIAVLIGGLWVANLYYWGF), 287–307 (IVFAAFLKLIVPFLVVLPGIA), 345–365 (FLPVGVKGVVFAALAAAIVSS), 401–421 (TAAVVALIIACLIAPMLGGIG), 427–447 (IQEYTGLVSPGILAVFLLGLF), 455–475 (GAIIGVVASIPFALFLKFMPL), 483–503 (MLYTLLFTMVVIAFTSLSTSI), and 523–543 (SFNIAAYGIMIVLAVLYTLFW).

It localises to the cell membrane. Functionally, actively transports glucose into cells by Na(+) cotransport. The protein is Sodium/glucose cotransporter (sglT) of Vibrio parahaemolyticus.